We begin with the raw amino-acid sequence, 169 residues long: NADH-quinone oxidoreductase subunit B (169 aa).

Residues cysteine 42, cysteine 43, cysteine 107, and cysteine 136 each contribute to the [4Fe-4S] cluster site.

Belongs to the complex I 20 kDa subunit family. As to quaternary structure, NDH-1 is composed of 14 different subunits. Subunits NuoB, C, D, E, F, and G constitute the peripheral sector of the complex. It depends on [4Fe-4S] cluster as a cofactor.

It localises to the cell inner membrane. It catalyses the reaction a quinone + NADH + 5 H(+)(in) = a quinol + NAD(+) + 4 H(+)(out). NDH-1 shuttles electrons from NADH, via FMN and iron-sulfur (Fe-S) centers, to quinones in the respiratory chain. The immediate electron acceptor for the enzyme in this species is believed to be ubiquinone. Couples the redox reaction to proton translocation (for every two electrons transferred, four hydrogen ions are translocated across the cytoplasmic membrane), and thus conserves the redox energy in a proton gradient. This chain is NADH-quinone oxidoreductase subunit B, found in Helicobacter hepaticus (strain ATCC 51449 / 3B1).